The primary structure comprises 356 residues: Nuclear hormone receptor family member nhr-42 (356 aa).

The nuclear receptor DNA-binding region spans 7–82 (SQTCLICGDS…VGMRESAVLS (76 aa)). The segment at 10–30 (CLICGDSADSLHFGALSCRAC) adopts an NR C4-type zinc-finger fold. The segment at 48–70 (CDRQCKVDTGMRKLCASCRYDKC) adopts an NR C4-type; atypical zinc-finger fold. An NR LBD domain is found at 108–356 (TSDSVLENLQ…HSSIFGNMAE (249 aa)).

Belongs to the nuclear hormone receptor family.

It is found in the nucleus. Orphan nuclear receptor. This chain is Nuclear hormone receptor family member nhr-42 (nhr-42), found in Caenorhabditis elegans.